Here is a 760-residue protein sequence, read N- to C-terminus: Catalase-peroxidase (760 aa).

The tract at residues 1-57 is disordered; sequence MTDSQDNRTPESPQGVDRKAEGGCPVLHDGVTAQGSESENPAIDSPTPRTGGRPNSL. The tryptophyl-tyrosyl-methioninium (Trp-Tyr) (with M-277) cross-link spans 129-251; that stretch reads WHAAGTYRIH…LGAVQMGLIY (123 aa). Residue histidine 130 is the Proton acceptor of the active site. The tryptophyl-tyrosyl-methioninium (Tyr-Met) (with W-129) cross-link spans 251-277; it reads YVNPEGPNGNPDPLASARDIRETFARM. Histidine 292 contacts heme b.

The protein belongs to the peroxidase family. Peroxidase/catalase subfamily. Homodimer or homotetramer. Heme b is required as a cofactor. Post-translationally, formation of the three residue Trp-Tyr-Met cross-link is important for the catalase, but not the peroxidase activity of the enzyme.

It catalyses the reaction H2O2 + AH2 = A + 2 H2O. The enzyme catalyses 2 H2O2 = O2 + 2 H2O. Functionally, bifunctional enzyme with both catalase and broad-spectrum peroxidase activity. This chain is Catalase-peroxidase, found in Nocardioides sp. (strain ATCC BAA-499 / JS614).